We begin with the raw amino-acid sequence, 402 residues long: NAD-dependent protein deacetylase sirtuin-7 (402 aa).

2 disordered regions span residues 1–25 (MAAG…REEQ) and 59–78 (VTEL…RQEE). Residues 9–25 (RSERKAAERVRRLREEQ) are compositionally biased toward basic and acidic residues. The region spanning 83 to 330 (PEELRRKVRE…RLLMDELGLE (248 aa)) is the Deacetylase sirtuin-type domain. Residues 108–127 (GAGI…NGVW) and 168–171 (QNCD) each bind NAD(+). Histidine 188 serves as the catalytic Proton acceptor. Zn(2+)-binding residues include cysteine 196, cysteine 199, cysteine 226, and cysteine 229. NAD(+)-binding positions include 269–271 (GSS), 298–300 (NLQ), and cysteine 316. The tract at residues 355–385 (SHSRKSLCRSREEPPPGDQSAPLASATPILG) is disordered. Arginine 390 carries the post-translational modification Asymmetric dimethylarginine; alternate. Residue arginine 390 is modified to Omega-N-methylarginine; alternate.

It belongs to the sirtuin family. Class IV subfamily. Interacts with UBTF and the RNA polymerase I complex. Interacts with components of the B-WICH complex, such as MYBBP1A, SMARCA5/SNF2H and BAZ1B/WSTF. Interacts with ELK4, leading to stabilization at target promoters for H3K18Ac deacetylation. Interacts with histone H2A and/or histone H2B. Interacts with DNMT1. Interacts with SIRT1. Zn(2+) serves as cofactor. Phosphorylated during mitosis. In terms of processing, methylation at Arg-390 by PRMT6 inhibits the H3K18Ac histone deacetylase activity, promoting mitochondria biogenesis and maintaining mitochondria respiration. Post-translationally, ubiquitinated via 'Lys-63'-linked ubiquitin chains. Deubiquitinated by USP7, inhibiting the H3K18Ac histone deacetylase activity and regulating gluconeogenesis. Ubiquitinated by E3 ubiquitin-protein ligase complex containing FBXO7; leading to proteasomal degradation.

The protein localises to the nucleus. The protein resides in the nucleolus. It is found in the nucleoplasm. Its subcellular location is the chromosome. It localises to the cytoplasm. The enzyme catalyses N(6)-acetyl-L-lysyl-[protein] + NAD(+) + H2O = 2''-O-acetyl-ADP-D-ribose + nicotinamide + L-lysyl-[protein]. The catalysed reaction is N(6)-glutaryl-L-lysyl-[protein] + NAD(+) + H2O = 2''-O-glutaryl-ADP-D-ribose + nicotinamide + L-lysyl-[protein]. It carries out the reaction N(6)-succinyl-L-lysyl-[protein] + NAD(+) + H2O = 2''-O-succinyl-ADP-D-ribose + nicotinamide + L-lysyl-[protein]. It catalyses the reaction N(6)-propanoyl-L-lysyl-[protein] + NAD(+) + H2O = 3''-O-propanoyl-ADP-D-ribose + nicotinamide + L-lysyl-[protein]. The enzyme catalyses N(6)-decanoyl-L-lysyl-[protein] + NAD(+) + H2O = 2''-O-decanoyl-ADP-D-ribose + nicotinamide + L-lysyl-[protein]. With respect to regulation, NAD-dependent protein-lysine deacetylase and deacylase activities are activated by nucleic acids. Histone deacetylase activity is activated by DNA. Protein-lysine deacylase activity is activated by RNA. H3K18Ac histone deacetylase activity is inhibited by methylation at Arg-390. H3K18Ac histone deacetylase activity is inhibited by deubiquitination by USP7. In terms of biological role, NAD-dependent protein-lysine deacylase that can act both as a deacetylase or deacylase (desuccinylase, depropionylase, deglutarylase and dedecanoylase), depending on the context. Specifically mediates deacetylation of histone H3 at 'Lys-18' (H3K18Ac). In contrast to other histone deacetylases, displays strong preference for a specific histone mark, H3K18Ac, directly linked to control of gene expression. H3K18Ac is mainly present around the transcription start site of genes and has been linked to activation of nuclear hormone receptors; SIRT7 thereby acts as a transcription repressor. Moreover, H3K18 hypoacetylation has been reported as a marker of malignancy in various cancers and seems to maintain the transformed phenotype of cancer cells. Also able to mediate deacetylation of histone H3 at 'Lys-36' (H3K36Ac) in the context of nucleosomes. Also mediates deacetylation of non-histone proteins, such as ATM, CDK9, DDX21, DDB1, FBL, FKBP5/FKBP51, GABPB1, RAN, RRP9/U3-55K and POLR1E/PAF53. Enriched in nucleolus where it stimulates transcription activity of the RNA polymerase I complex. Acts by mediating the deacetylation of the RNA polymerase I subunit POLR1E/PAF53, thereby promoting the association of RNA polymerase I with the rDNA promoter region and coding region. In response to metabolic stress, SIRT7 is released from nucleoli leading to hyperacetylation of POLR1E/PAF53 and decreased RNA polymerase I transcription. Required to restore the transcription of ribosomal RNA (rRNA) at the exit from mitosis. Promotes pre-ribosomal RNA (pre-rRNA) cleavage at the 5'-terminal processing site by mediating deacetylation of RRP9/U3-55K, a core subunit of the U3 snoRNP complex. Mediates 'Lys-37' deacetylation of Ran, thereby regulating the nuclear export of NF-kappa-B subunit RELA/p65. Acts as a regulator of DNA damage repair by mediating deacetylation of ATM during the late stages of DNA damage response, promoting ATM dephosphorylation and deactivation. Suppresses the activity of the DCX (DDB1-CUL4-X-box) E3 ubiquitin-protein ligase complexes by mediating deacetylation of DDB1, which prevents the interaction between DDB1 and CUL4 (CUL4A or CUL4B). Activates RNA polymerase II transcription by mediating deacetylation of CDK9, thereby promoting 'Ser-2' phosphorylation of the C-terminal domain (CTD) of RNA polymerase II. Deacetylates FBL, promoting histone-glutamine methyltransferase activity of FBL. Acts as a regulator of mitochondrial function by catalyzing deacetylation of GABPB1. Regulates Akt/AKT1 activity by mediating deacetylation of FKBP5/FKBP51. Required to prevent R-loop-associated DNA damage and transcription-associated genomic instability by mediating deacetylation and subsequent activation of DDX21, thereby overcoming R-loop-mediated stalling of RNA polymerases. In addition to protein deacetylase activity, also acts as a protein-lysine deacylase. Acts as a protein depropionylase by mediating depropionylation of Osterix (SP7), thereby regulating bone formation by osteoblasts. Acts as a histone deglutarylase by mediating deglutarylation of histone H4 on 'Lys-91' (H4K91glu); a mark that destabilizes nucleosomes by promoting dissociation of the H2A-H2B dimers from nucleosomes. Acts as a histone desuccinylase: in response to DNA damage, recruited to DNA double-strand breaks (DSBs) and catalyzes desuccinylation of histone H3 on 'Lys-122' (H3K122succ), thereby promoting chromatin condensation and DSB repair. Also promotes DSB repair by promoting H3K18Ac deacetylation, regulating non-homologous end joining (NHEJ). Along with its role in DNA repair, required for chromosome synapsis during prophase I of female meiosis by catalyzing H3K18Ac deacetylation. Involved in transcriptional repression of LINE-1 retrotransposon via H3K18Ac deacetylation, and promotes their association with the nuclear lamina. Required to stabilize ribosomal DNA (rDNA) heterochromatin and prevent cellular senescence induced by rDNA instability. Acts as a negative regulator of SIRT1 by preventing autodeacetylation of SIRT1, restricting SIRT1 deacetylase activity. The sequence is that of NAD-dependent protein deacetylase sirtuin-7 from Rattus norvegicus (Rat).